We begin with the raw amino-acid sequence, 207 residues long: Ribosomal RNA large subunit methyltransferase E (207 aa).

Gly-61, Trp-63, Asp-81, Asp-97, and Asp-122 together coordinate S-adenosyl-L-methionine. Catalysis depends on Lys-162, which acts as the Proton acceptor.

This sequence belongs to the class I-like SAM-binding methyltransferase superfamily. RNA methyltransferase RlmE family.

It is found in the cytoplasm. It carries out the reaction uridine(2552) in 23S rRNA + S-adenosyl-L-methionine = 2'-O-methyluridine(2552) in 23S rRNA + S-adenosyl-L-homocysteine + H(+). Functionally, specifically methylates the uridine in position 2552 of 23S rRNA at the 2'-O position of the ribose in the fully assembled 50S ribosomal subunit. This Pseudomonas putida (strain ATCC 700007 / DSM 6899 / JCM 31910 / BCRC 17059 / LMG 24140 / F1) protein is Ribosomal RNA large subunit methyltransferase E.